We begin with the raw amino-acid sequence, 508 residues long: Histidine ammonia-lyase (508 aa).

A cross-link (5-imidazolinone (Ala-Gly)) is located at residues 141-143 (ASG). Ser-142 carries the 2,3-didehydroalanine (Ser) modification.

Belongs to the PAL/histidase family. Post-translationally, contains an active site 4-methylidene-imidazol-5-one (MIO), which is formed autocatalytically by cyclization and dehydration of residues Ala-Ser-Gly.

The protein localises to the cytoplasm. The enzyme catalyses L-histidine = trans-urocanate + NH4(+). Its pathway is amino-acid degradation; L-histidine degradation into L-glutamate; N-formimidoyl-L-glutamate from L-histidine: step 1/3. In Bacillus subtilis (strain 168), this protein is Histidine ammonia-lyase (hutH).